Consider the following 141-residue polypeptide: Putative phosphatidylglycerol/phosphatidylinositol transfer protein DDB_G0278295 (141 aa).

The signal sequence occupies residues 1–19 (MRLLLALFFVLALVSPSFT). Asparagine 82 and asparagine 104 each carry an N-linked (GlcNAc...) asparagine glycan.

It belongs to the NPC2 family. Monomer.

Functionally, catalyzes the intermembrane transfer of phosphatidylglycerol and phosphatidylinositol. This chain is Putative phosphatidylglycerol/phosphatidylinositol transfer protein DDB_G0278295, found in Dictyostelium discoideum (Social amoeba).